A 1137-amino-acid chain; its full sequence is Guanine nucleotide exchange factor DBS (1137 aa).

The 173-residue stretch at 52–224 (TAMATDEIMH…DLGGTLDYCH (173 aa)) folds into the CRAL-TRIO domain. The stretch at 351 to 456 (LQLRHFEQGF…IARRRGLLSK (106 aa)) is one Spectrin repeat. Phosphoserine occurs at positions 457 and 480. A coiled-coil region spans residues 503–529 (LETGAENKIQELNAIYKEYESILNQDL). The tract at residues 557 to 625 (LAARQTRPVQ…QGRGSAGEEE (69 aa)) is disordered. Positions 584–597 (GIRRGSENSSSEGG) are enriched in low complexity. The span at 607–616 (AKSEMSESRQ) shows a compositional bias: basic and acidic residues. Serine 620 carries the phosphoserine modification. Residues 631-811 (LRRHVMSELL…LGILKAVNDS (181 aa)) enclose the DH domain. Residues 829–945 (KLLMQGSFSV…WVNEIRKVLT (117 aa)) enclose the PH domain. Disordered stretches follow at residues 955–1058 (SQHR…LVPG) and 1116–1137 (GPSG…RAHP). Residues 962 to 977 (QSQSLPLPAPTSTSPS) show a composition bias toward low complexity. Serine 1033, serine 1034, serine 1041, and serine 1042 each carry phosphoserine. The 62-residue stretch at 1055–1116 (LVPGKYTVVA…PASSLSVRLG (62 aa)) folds into the SH3 domain. Residues 1119-1128 (GSAQCLSSSG) are compositionally biased toward polar residues.

It belongs to the MCF2 family. Interacts with GTP-bound RAC1. Interacts with CDC42. Interacts with RHOA. Interacts with CCPG1, which results in specific inhibition of its exchange activity toward RHOA, but does not affect its activity on CDC42.

It localises to the cytoplasm. The protein resides in the cell membrane. Its subcellular location is the endomembrane system. Functionally, guanine nucleotide exchange factor that catalyzes guanine nucleotide exchange on RHOA and CDC42, and thereby contributes to the regulation of RHOA and CDC42 signaling pathways. Seems to lack activity with RAC1. Becomes activated and highly tumorigenic by truncation of the N-terminus. Isoform 5 activates CDC42. In terms of biological role, does not catalyze guanine nucleotide exchange on CDC42. The sequence is that of Guanine nucleotide exchange factor DBS (MCF2L) from Homo sapiens (Human).